A 262-amino-acid chain; its full sequence is Cytochrome c oxidase subunit 3 (262 aa).

A run of 7 helical transmembrane segments spans residues 11–31 (LVEP…LTVG), 32–52 (LVMW…VMIV), 83–103 (GMVL…WAFF), 125–147 (LNAF…TVTW), 160–180 (AIQS…LQAW), 198–218 (FFVA…FLMV), and 240–260 (AWYW…IYWW).

It belongs to the cytochrome c oxidase subunit 3 family. As to quaternary structure, component of the cytochrome c oxidase (complex IV, CIV), a multisubunit enzyme composed of a catalytic core of 3 subunits and several supernumerary subunits. The complex exists as a monomer or a dimer and forms supercomplexes (SCs) in the inner mitochondrial membrane with ubiquinol-cytochrome c oxidoreductase (cytochrome b-c1 complex, complex III, CIII).

It is found in the mitochondrion inner membrane. The catalysed reaction is 4 Fe(II)-[cytochrome c] + O2 + 8 H(+)(in) = 4 Fe(III)-[cytochrome c] + 2 H2O + 4 H(+)(out). Component of the cytochrome c oxidase, the last enzyme in the mitochondrial electron transport chain which drives oxidative phosphorylation. The respiratory chain contains 3 multisubunit complexes succinate dehydrogenase (complex II, CII), ubiquinol-cytochrome c oxidoreductase (cytochrome b-c1 complex, complex III, CIII) and cytochrome c oxidase (complex IV, CIV), that cooperate to transfer electrons derived from NADH and succinate to molecular oxygen, creating an electrochemical gradient over the inner membrane that drives transmembrane transport and the ATP synthase. Cytochrome c oxidase is the component of the respiratory chain that catalyzes the reduction of oxygen to water. Electrons originating from reduced cytochrome c in the intermembrane space (IMS) are transferred via the dinuclear copper A center (CU(A)) of subunit 2 and heme A of subunit 1 to the active site in subunit 1, a binuclear center (BNC) formed by heme A3 and copper B (CU(B)). The BNC reduces molecular oxygen to 2 water molecules using 4 electrons from cytochrome c in the IMS and 4 protons from the mitochondrial matrix. This is Cytochrome c oxidase subunit 3 (COIII) from Branchiostoma floridae (Florida lancelet).